The chain runs to 235 residues: Endonuclease V (235 aa).

Mg(2+) contacts are provided by D47 and D117.

It belongs to the endonuclease V family. It depends on Mg(2+) as a cofactor.

The protein resides in the cytoplasm. The enzyme catalyses Endonucleolytic cleavage at apurinic or apyrimidinic sites to products with a 5'-phosphate.. Its function is as follows. DNA repair enzyme involved in the repair of deaminated bases. Selectively cleaves double-stranded DNA at the second phosphodiester bond 3' to a deoxyinosine leaving behind the intact lesion on the nicked DNA. The protein is Endonuclease V of Protochlamydia amoebophila (strain UWE25).